We begin with the raw amino-acid sequence, 549 residues long: MMCLECASAAAGGAEEEEADAERRRRRRGAQPGAGGSACCGARGVGGAGVVSADEEVQTLSGSVRRVPSGLPSIPSTPGCAAAAKGPSAPQPKPASLGRGRGAAAAILSLGNVLNYLDRYTVAGVLLDIQQHFGVKDRGAGLLQSVFICSFMVAAPIFGYLGDRFNRKVILSCGIFFWSAVTFSSSFIPQQYFWLLVLSRGLVGIGEASYSTIAPTIIGDLFTKNTRTLMLSVFYFAIPLGSGLGYITGSSVKQAAGDWHWALRVSPVLGMITGTLILILVPATKRGHADQLGGQLKARTSWLRDMKALIRNRSYVFSSLATSAVSFATGALGMWIPLYLHRAQVVQKTAETCNSPPCGAKDSLIFGAITCFTGFLGVVTGAGATRWCRLRTQRADPLVCAVGMLGSAIFICLIFVAAKTSIVGAYICIFVGETLLFSNWAITADILMYVVIPTRRATAVALQSFTSHLLGDAGSPYLIGFISDLIRQSTKDSPLWEFLSLGYALMLCPFVVVLGGMFFLATALFFLSDRAKAEQQVNQLVMPPASVKV.

2 disordered regions span residues 14 to 36 (AEEE…GAGG) and 78 to 97 (PGCA…PASL). 11 helical membrane passes run 141 to 161 (GLLQ…FGYL), 169 to 189 (VILS…SFIP), 202 to 222 (LVGI…GDLF), 229 to 249 (LMLS…YITG), 261 to 281 (WALR…LILV), 320 to 340 (LATS…PLYL), 364 to 384 (LIFG…GAGA), 398 to 418 (LVCA…FVAA), 422 to 442 (IVGA…NWAI), 466 to 486 (TSHL…SDLI), and 507 to 527 (LCPF…LFFL).

The protein belongs to the major facilitator superfamily. Spinster (TC 2.A.1.49) family. In terms of tissue distribution, expression is high in the lungs and liver, low in the lymph nodes, spleen and bone marrow, and very low but detectable in the thymus. Not expressed in red blood cells. Also expressed in the inner ear: expressed in the cochlea, both in the lateral wall and organ of Corti.

It is found in the cell membrane. Its subcellular location is the endosome membrane. It carries out the reaction sphing-4-enine 1-phosphate(in) = sphing-4-enine 1-phosphate(out). The enzyme catalyses sphinganine 1-phosphate(in) = sphinganine 1-phosphate(out). Functionally, lipid transporter that specifically mediates export of sphingosine-1-phosphate (sphing-4-enine 1-phosphate, S1P) and sphinganine-1-phosphate in the lymph, thereby playing a role in lymphocyte trafficking. S1P is a bioactive signaling molecule that regulates many physiological processes important for the development and for the immune system. Regulates levels of S1P and the S1P gradient that exists between the high circulating concentrations of S1P and low tissue levels that control lymphocyte trafficking. Required for the egress of T-cells from lymph nodes during an immune response by mediating S1P secretion, which generates a gradient that enables activated T-cells to access lymph. Also required for the egress of immature B-cells from the bone marrow. In contrast, it does not mediate S1P release from red blood cells. Involved in auditory function: S1P release in the inner ear is required for maintenance of the endocochlear potential in the cochlea. In addition to export, also able to mediate S1P import. The protein is Sphingosine-1-phosphate transporter SPNS2 of Mus musculus (Mouse).